The sequence spans 441 residues: Protein translocase subunit SecY (441 aa).

10 consecutive transmembrane segments (helical) span residues 25-45 (YFVI…IPGI), 78-98 (IFAL…ILTL), 126-146 (LILA…IPGL), 155-175 (ISFY…LMWL), 184-204 (IGNG…PSSF), 218-238 (VLLF…VVYI), 275-295 (VIPA…ASWF), 318-338 (YILT…GLAF), 376-396 (FLGS…RFFM), and 398-418 (VPFY…IDFI).

The protein belongs to the SecY/SEC61-alpha family. In terms of assembly, component of the Sec protein translocase complex. Heterotrimer consisting of SecY, SecE and SecG subunits. The heterotrimers can form oligomers, although 1 heterotrimer is thought to be able to translocate proteins. Interacts with the ribosome. Interacts with SecDF, and other proteins may be involved. Interacts with SecA.

The protein resides in the cell membrane. Functionally, the central subunit of the protein translocation channel SecYEG. Consists of two halves formed by TMs 1-5 and 6-10. These two domains form a lateral gate at the front which open onto the bilayer between TMs 2 and 7, and are clamped together by SecE at the back. The channel is closed by both a pore ring composed of hydrophobic SecY resides and a short helix (helix 2A) on the extracellular side of the membrane which forms a plug. The plug probably moves laterally to allow the channel to open. The ring and the pore may move independently. The chain is Protein translocase subunit SecY from Buchnera aphidicola subsp. Baizongia pistaciae (strain Bp).